Reading from the N-terminus, the 1040-residue chain is uncharacterized protein (1040 aa).

Residues 403–588 enclose the Helicase ATP-binding domain; the sequence is RLEESSKKGG…YSLIKFLRIK (186 aa). 416-423 provides a ligand contact to ATP; sequence DDMGLGKT. The RING-type zinc finger occupies 746–798; sequence CSLCMDVVAELLIIVPCGHFLCRECLTHVITSSEDMAKQTSNENISPKCSVCE. The region spanning 866 to 1032 is the Helicase C-terminal domain; it reads KIEKALNAVK…ISRLNTKELS (167 aa).

It belongs to the SNF2/RAD54 helicase family.

The protein resides in the nucleus. This is an uncharacterized protein from Schizosaccharomyces pombe (strain 972 / ATCC 24843) (Fission yeast).